The chain runs to 507 residues: Glycerol kinase (507 aa).

Thr14 serves as a coordination point for ADP. ATP-binding residues include Thr14, Thr15, and Ser16. A sn-glycerol 3-phosphate-binding site is contributed by Thr14. Arg18 contacts ADP. Residues Arg84, Glu85, Tyr136, and Asp246 each coordinate sn-glycerol 3-phosphate. The glycerol site is built by Arg84, Glu85, Tyr136, Asp246, and Gln247. Residues Thr268 and Gly311 each coordinate ADP. The ATP site is built by Thr268, Gly311, Gln315, and Gly412. Residues Gly412 and Asn416 each contribute to the ADP site.

Belongs to the FGGY kinase family.

It catalyses the reaction glycerol + ATP = sn-glycerol 3-phosphate + ADP + H(+). Its pathway is polyol metabolism; glycerol degradation via glycerol kinase pathway; sn-glycerol 3-phosphate from glycerol: step 1/1. Inhibited by fructose 1,6-bisphosphate (FBP). In terms of biological role, key enzyme in the regulation of glycerol uptake and metabolism. Catalyzes the phosphorylation of glycerol to yield sn-glycerol 3-phosphate. The polypeptide is Glycerol kinase (Vibrio atlanticus (strain LGP32) (Vibrio splendidus (strain Mel32))).